The following is a 95-amino-acid chain: Integration host factor subunit beta (95 aa).

This sequence belongs to the bacterial histone-like protein family. As to quaternary structure, heterodimer of an alpha and a beta chain.

In terms of biological role, this protein is one of the two subunits of integration host factor, a specific DNA-binding protein that functions in genetic recombination as well as in transcriptional and translational control. The protein is Integration host factor subunit beta of Shewanella pealeana (strain ATCC 700345 / ANG-SQ1).